Here is a 73-residue protein sequence, read N- to C-terminus: MASRNSVTGFALFSFVFAVILSLAGAQSLAPAPAPTSDGTSIDQGIAYLLMVVALVLTYLIHPLDASSSYSFF.

The first 26 residues, 1 to 26 (MASRNSVTGFALFSFVFAVILSLAGA), serve as a signal peptide directing secretion. Pyrrolidone carboxylic acid is present on Gln27. A 4-hydroxyproline mark is found at Pro31, Pro33, and Pro35. O-linked (Ara...) hydroxyproline glycans are attached at residues Pro31, Pro33, and Pro35. Ser37 is lipidated: GPI-anchor amidated serine. The propeptide at 38-73 (DGTSIDQGIAYLLMVVALVLTYLIHPLDASSSYSFF) is removed in mature form.

Belongs to the AG-peptide AGP family. Contains 4-hydroxyproline; hydroxylated on Pro-31, Pro-33 and Pro-35. Post-translationally, O-glycosylated on hydroxyprolines; noncontiguous hydroxylproline residues are glycosylated with arabinogalactan. In terms of tissue distribution, predominantly expressed in flowers.

Its subcellular location is the cell membrane. Functionally, proteoglycan that seems to be implicated in diverse developmental roles such as differentiation, cell-cell recognition, embryogenesis and programmed cell death. The protein is Arabinogalactan protein 16 of Arabidopsis thaliana (Mouse-ear cress).